A 204-amino-acid chain; its full sequence is Holliday junction branch migration complex subunit RuvA (204 aa).

The segment at 1–64 is domain I; that stretch reads MIAKLTGILD…ETDQRLIGFT (64 aa). The interval 65 to 143 is domain II; that stretch reads SAGERAWFRL…GLAGYASPVG (79 aa). A flexible linker region spans residues 144-154; the sequence is PGGEAFVAPPG. The interval 154–204 is domain III; that stretch reads GNASADAVSALQNLGFKPAVASSAVAAAVKELGEDAGLNDLVRVALKRAAG.

The protein belongs to the RuvA family. In terms of assembly, homotetramer. Forms an RuvA(8)-RuvB(12)-Holliday junction (HJ) complex. HJ DNA is sandwiched between 2 RuvA tetramers; dsDNA enters through RuvA and exits via RuvB. An RuvB hexamer assembles on each DNA strand where it exits the tetramer. Each RuvB hexamer is contacted by two RuvA subunits (via domain III) on 2 adjacent RuvB subunits; this complex drives branch migration. In the full resolvosome a probable DNA-RuvA(4)-RuvB(12)-RuvC(2) complex forms which resolves the HJ.

It localises to the cytoplasm. Functionally, the RuvA-RuvB-RuvC complex processes Holliday junction (HJ) DNA during genetic recombination and DNA repair, while the RuvA-RuvB complex plays an important role in the rescue of blocked DNA replication forks via replication fork reversal (RFR). RuvA specifically binds to HJ cruciform DNA, conferring on it an open structure. The RuvB hexamer acts as an ATP-dependent pump, pulling dsDNA into and through the RuvAB complex. HJ branch migration allows RuvC to scan DNA until it finds its consensus sequence, where it cleaves and resolves the cruciform DNA. This chain is Holliday junction branch migration complex subunit RuvA, found in Novosphingobium aromaticivorans (strain ATCC 700278 / DSM 12444 / CCUG 56034 / CIP 105152 / NBRC 16084 / F199).